Reading from the N-terminus, the 153-residue chain is MSPSNVFIDSSVMVGLFIGDEKAHKLLSKLINDGFMLCINPIVFSETMFKVTFHIALEDGIRGVYDLKKNLNRYSWVYEEVREKIDKMIKMNYLKILDTNWEVLKLAPEIGKKYNLLTNDAIIIATCKYYRINKLATFDSDFEKVDFIEIIKE.

A PINc domain is found at 6 to 152 (VFIDSSVMVG…EKVDFIEIIK (147 aa)). 2 residues coordinate Mg(2+): Asp9 and Asp120.

This sequence belongs to the PINc/VapC protein family. The cofactor is Mg(2+).

Toxic component of a type II toxin-antitoxin (TA) system. An RNase. The sequence is that of Ribonuclease VapC6 from Methanocaldococcus jannaschii (strain ATCC 43067 / DSM 2661 / JAL-1 / JCM 10045 / NBRC 100440) (Methanococcus jannaschii).